Consider the following 293-residue polypeptide: Glycine--tRNA ligase alpha subunit (293 aa).

The protein belongs to the class-II aminoacyl-tRNA synthetase family. As to quaternary structure, tetramer of two alpha and two beta subunits.

The protein localises to the cytoplasm. The enzyme catalyses tRNA(Gly) + glycine + ATP = glycyl-tRNA(Gly) + AMP + diphosphate. In Aliarcobacter butzleri (strain RM4018) (Arcobacter butzleri), this protein is Glycine--tRNA ligase alpha subunit.